A 498-amino-acid polypeptide reads, in one-letter code: Neoxanthin synthase, chloroplastic (498 aa).

The transit peptide at 1 to 33 (METLLKPLTSLLLSSPTPHRSIFQQNPPSLNPT) directs the protein to the chloroplast. The interval 16 to 38 (PTPHRSIFQQNPPSLNPTTKKKS) is disordered. Polar residues predominate over residues 22–33 (IFQQNPPSLNPT). Residue 84-112 (VIIIGAGPAGLRLAEHVSKYGIKVCCVDP) coordinates NAD(+).

It belongs to the lycopene cyclase family.

It localises to the plastid. It is found in the chloroplast. It carries out the reaction all-trans-violaxanthin = all-trans-neoxanthin. Its pathway is carotenoid biosynthesis; neoxanthin biosynthesis. In terms of biological role, involved in the synthesis of neoxanthin, the last product of carotenoid synthesis and a precursor of abscisic acid. This is Neoxanthin synthase, chloroplastic (NXS) from Solanum tuberosum (Potato).